A 1663-amino-acid polypeptide reads, in one-letter code: Complement C3 (1663 aa).

Residues methionine 1 to glycine 22 form the signal peptide. Residues serine 38 and serine 70 each carry the phosphoserine; by FAM20C modification. An N-linked (GlcNAc...) asparagine glycan is attached at asparagine 85. Phosphoserine; by FAM20C is present on residues serine 297 and serine 303. Disulfide bonds link cysteine 559-cysteine 816, cysteine 627-cysteine 662, cysteine 693-cysteine 720, cysteine 694-cysteine 727, cysteine 707-cysteine 728, cysteine 873-cysteine 1513, cysteine 1101-cysteine 1158, cysteine 1358-cysteine 1489, cysteine 1389-cysteine 1458, cysteine 1506-cysteine 1511, cysteine 1518-cysteine 1590, cysteine 1537-cysteine 1661, and cysteine 1637-cysteine 1646. Residue serine 672 is modified to Phosphoserine; by FAM20C. One can recognise an Anaphylatoxin-like domain in the interval cysteine 693 to cysteine 728. Residue asparagine 939 is glycosylated (N-linked (GlcNAc...) asparagine). The interval arginine 954–aspartate 973 is disordered. Phosphoserine; by FAM20C is present on serine 968. The segment at residues cysteine 1010–glutamine 1013 is a cross-link (isoglutamyl cysteine thioester (Cys-Gln)). Serine 1321 carries the post-translational modification Phosphoserine; by FAM20C. The region spanning cysteine 1518–cysteine 1661 is the NTR domain. Serine 1573 carries the post-translational modification Phosphoserine; by FAM20C. Asparagine 1617 is a glycosylation site (N-linked (GlcNAc...) asparagine). The segment at glutamate 1634–phenylalanine 1659 is interaction with CFP/properdin.

As to quaternary structure, in absence of complement activation, the C3 precursor is first processed by the removal of 4 Arg residues, forming two chains, beta and alpha, linked by a disulfide bond. Complement C3b is composed of complement C3b and complement C3 beta chains that are associated via disulfide bonds. Non-enzymatic component of the C5 convertase, also named C4bC2bC3b, composed of the serine protease complement C2b (C2), complement C3b, as well as complement C4b (C4). Non-enzymatic component of the C5 convertase of the alternative complement pathways composed of the serine protease complement CFB and complement C3b. Interacts with CFP; interaction takes place together with CFB in the alternative complement system and allows the complex to become active. Interacts with CR1 (via Sushi 8 and Sushi 9 domains). Interacts with CFH. In terms of assembly, interacts with CFH. Interacts with CR2. As to quaternary structure, during pregnancy, C3dg exists as a complex (probably a 2:2:2 heterohexamer) with AGT and the proform of PRG2. Interacts with CR2 (via the N-terminal Sushi domains 1 and 2). (Microbial infection) C3b interacts with herpes simplex virus 1 (HHV-1) and herpes simplex virus 2 (HHV-2) envelope glycoprotein C; this interaction inhibits the activation of the complement system. In terms of assembly, (Microbial infection) Interacts with Staphylococcus aureus immunoglobulin-binding protein Sbi; this interaction prevents the association between C3dg and CR2. As to quaternary structure, (Microbial infection) Interacts with Staphylococcus aureus protein Fib. In terms of processing, C3 precursor is first processed by the removal of 4 Arg residues, forming two chains, beta and alpha, linked by a disulfide bond. During activation of the complement systems, the alpha chain is cleaved into C3a and C3b by the C3 convertase: C3b stays linked to the beta chain, while C3a is released in the plasma. The alpha chain is cleaved by the serine protease complement C2b component of the C3 convertase to generate C3a and C3b following activation by the classical, lectin and GZMK complement systems. The alpha chain is cleaved by CFB component of the C3 convertase to generate C3a and C3b following activation by the alternative complement system. Post-translationally, C3a is further processed by carboxypeptidases to release the C-terminal arginine residue generating the acylation stimulating protein (ASP). Levels of ASP are increased in adipocytes in the postprandial period and by insulin and dietary chylomicrons. Complement C3b is rapidly split in two positions by factor I (CFI) and a cofactor (CFH) to form iC3b (inactivated C3b) and C3f which is released. CFI and CFH catalyze proteolytic degradation of already-deposited complement C3b. Then iC3b is slowly cleaved (possibly by CFI) to form C3c (beta chain + alpha' chain fragment 1 + alpha' chain fragment 2), C3dg and C3f. Other proteases produce other fragments such as C3d or C3g. In terms of processing, upon activation, the internal thioester bond reacts with carbohydrate antigens on the target surface to form amide or ester bonds, leading to covalent association with the surface of pathogens. Post-translationally, complement C3b interacts with complement C4b via a thioester linkage. Phosphorylated by FAM20C in the extracellular medium. In terms of processing, (Microbial infection) C3 is cleaved by Staphylococcus aureus aureolysin; this cleavage renders C3a and C3b inactive. C3b is rapidly degraded by host factors CFH and CFI preventing its deposition on the bacterial surface while C3a is further inactivated by aureolysin. Post-translationally, (Microbial infection) Complement C3 beta chain is cleaved and inactivated by S.pyogenes SpeB. (Microbial infection) Cleaved by N.meningitidis NalP between Leu-744 and Gly-745, generating a slightly shorter C3 alpha form and a slightly longer C3 beta form. The C3b-like fragment is degraded in the presence of the complement regulators CFH and CFI, preventing its deposition on the bacterial surface. Plasma. In terms of tissue distribution, produced in adipocytes and released into the plasma during both the fasting and postprandial periods.

The protein resides in the secreted. It localises to the cell surface. Its activity is regulated as follows. Complement activation is inhibited by VSIG4. Functionally, precursor of non-enzymatic components of the classical, alternative, lectin and GZMK complement pathways, which consist in a cascade of proteins that leads to phagocytosis and breakdown of pathogens and signaling that strengthens the adaptive immune system. Non-enzymatic component of C5 convertase. Generated following cleavage by C3 convertase, it covalently attaches to the surface of pathogens, where it acts as an opsonin that marks the surface of antigens for removal. Complement C3b binds covalently via its reactive thioester, to cell surface carbohydrates or immune aggregates. Together with complement C4b, it then recruits the serine protease complement C2b to form the C5 convertase, which cleaves and activate C5, the next component of the complement pathways. In the alternative complement pathway, recruits the serine protease CFB to form the C5 convertase that cleaves and activates C5. In terms of biological role, mediator of local inflammatory process released following cleavage by C3 convertase. Acts by binding to its receptor, C3AR1, activating G protein-coupled receptor signaling, promoting the phosphorylation, ARRB2-mediated internalization and endocytosis of C3AR1. C3a anaphylatoxin stimulates the activation of immune cells such as mast cells and basophilic leukocytes to release inflammation agents, such as cytokines, chemokines and histamine, which promote inflammation development. Also acts as potent chemoattractant for the migration of macrophages and neutrophils to the inflamed tissues, resulting in neutralization of the inflammatory triggers by multiple ways, such as phagocytosis and generation of reactive oxidants. Its function is as follows. Adipogenic hormone that stimulates triglyceride synthesis and glucose transport in adipocytes, regulating fat storage and playing a role in postprandial triglyceride clearance. Appears to stimulate triglyceride synthesis via activation of the PLC, MAPK and AKT signaling pathways. Acts by binding to its receptor, C5AR2, activating G protein-coupled receptor signaling, promoting the phosphorylation, ARRB2-mediated internalization and endocytosis of C5AR2. Functionally, acts as a chemoattractant for neutrophils in chronic inflammation. In Homo sapiens (Human), this protein is Complement C3.